The following is a 353-amino-acid chain: MDIAALLSGGVDSSVVVHLLCEQGYKPTLFYIKIGMDGAEYMDCSAEEDIELSTAIARRYGLALEVVDLHREYWDNVAAYAIEKIRKGQTPNPDVMCNKLIKFGCFEQQVGKDFDLTATGHYATTLQLGGKTWLGTAKDPIKDQTDFLAQIDYLQVSKLLFPIGGLMKHEVREIALQAGLPSARRKDSQGICFLGKINYNDFVRRFLGEKEGAVIEFETGKKIGTHRGYWFHTIGQRKGLGLGGGPWFVVKKDIQDNIIYVSHGYDAEQQYGYEFRMKDFNFITDNPWEGSTGEEEVTFKIRHTPEFIKGRLLHDEEGYRIISSEKLQGIAPGQFGVIYDAESRVCFGSGEIG.

An ATP-binding site is contributed by 6 to 13; the sequence is LLSGGVDS. The segment at 92 to 94 is interaction with target base in tRNA; sequence NPD. Cys-97 (nucleophile) is an active-site residue. An intrachain disulfide couples Cys-97 to Cys-192. Gly-120 provides a ligand contact to ATP. The tract at residues 142-144 is interaction with tRNA; the sequence is KDQ. The active-site Cysteine persulfide intermediate is Cys-192.

This sequence belongs to the MnmA/TRMU family.

Its subcellular location is the cytoplasm. It carries out the reaction S-sulfanyl-L-cysteinyl-[protein] + uridine(34) in tRNA + AH2 + ATP = 2-thiouridine(34) in tRNA + L-cysteinyl-[protein] + A + AMP + diphosphate + H(+). In terms of biological role, catalyzes the 2-thiolation of uridine at the wobble position (U34) of tRNA, leading to the formation of s(2)U34. This Bacteroides fragilis (strain ATCC 25285 / DSM 2151 / CCUG 4856 / JCM 11019 / LMG 10263 / NCTC 9343 / Onslow / VPI 2553 / EN-2) protein is tRNA-specific 2-thiouridylase MnmA 2.